The primary structure comprises 355 residues: UDP-N-acetylglucosamine--N-acetylmuramyl-(pentapeptide) pyrophosphoryl-undecaprenol N-acetylglucosamine transferase (355 aa).

UDP-N-acetyl-alpha-D-glucosamine is bound by residues 14–16, Asn-126, Arg-162, Ser-190, Ile-243, 262–267, and Gln-287; these read TGG and ALTVSE.

It belongs to the glycosyltransferase 28 family. MurG subfamily.

It localises to the cell inner membrane. The catalysed reaction is di-trans,octa-cis-undecaprenyl diphospho-N-acetyl-alpha-D-muramoyl-L-alanyl-D-glutamyl-meso-2,6-diaminopimeloyl-D-alanyl-D-alanine + UDP-N-acetyl-alpha-D-glucosamine = di-trans,octa-cis-undecaprenyl diphospho-[N-acetyl-alpha-D-glucosaminyl-(1-&gt;4)]-N-acetyl-alpha-D-muramoyl-L-alanyl-D-glutamyl-meso-2,6-diaminopimeloyl-D-alanyl-D-alanine + UDP + H(+). It functions in the pathway cell wall biogenesis; peptidoglycan biosynthesis. Its function is as follows. Cell wall formation. Catalyzes the transfer of a GlcNAc subunit on undecaprenyl-pyrophosphoryl-MurNAc-pentapeptide (lipid intermediate I) to form undecaprenyl-pyrophosphoryl-MurNAc-(pentapeptide)GlcNAc (lipid intermediate II). The chain is UDP-N-acetylglucosamine--N-acetylmuramyl-(pentapeptide) pyrophosphoryl-undecaprenol N-acetylglucosamine transferase from Vibrio vulnificus (strain YJ016).